The chain runs to 311 residues: Cbb3-type cytochrome c oxidase subunit CcoP1 (311 aa).

Transmembrane regions (helical) follow at residues 4-24 (FWSG…FWLI) and 56-76 (RWWF…LVLY). Cytochrome c domains lie at 130–209 (QAVK…RKDL) and 220–302 (ADLS…YSLS). 8 residues coordinate heme c: cysteine 143, cysteine 146, histidine 147, methionine 186, cysteine 233, cysteine 236, histidine 237, and methionine 279.

This sequence belongs to the CcoP / FixP family. Component of the cbb3-type cytochrome c oxidase at least composed of CcoN, CcoO, CcoQ and CcoP. The cofactor is heme c.

It localises to the cell inner membrane. Its pathway is energy metabolism; oxidative phosphorylation. Its function is as follows. C-type cytochrome. Part of the cbb3-type cytochrome c oxidase complex. CcoP subunit is required for transferring electrons from donor cytochrome c via its heme groups to CcoO subunit. From there, electrons are shuttled to the catalytic binuclear center of CcoN subunit where oxygen reduction takes place. The complex also functions as a proton pump. The polypeptide is Cbb3-type cytochrome c oxidase subunit CcoP1 (Stutzerimonas stutzeri (Pseudomonas stutzeri)).